The sequence spans 162 residues: 2-C-methyl-D-erythritol 2,4-cyclodiphosphate synthase (162 aa).

A divalent metal cation is bound by residues Asp8 and His10. 4-CDP-2-C-methyl-D-erythritol 2-phosphate-binding positions include Asp8–His10 and His34–Ser35. An a divalent metal cation-binding site is contributed by His42. Residues Asp56–Gly58, Phe61–Asp65, Thr132–Glu135, Phe139, and Lys142 contribute to the 4-CDP-2-C-methyl-D-erythritol 2-phosphate site.

The protein belongs to the IspF family. Homotrimer. It depends on a divalent metal cation as a cofactor.

It carries out the reaction 4-CDP-2-C-methyl-D-erythritol 2-phosphate = 2-C-methyl-D-erythritol 2,4-cyclic diphosphate + CMP. It participates in isoprenoid biosynthesis; isopentenyl diphosphate biosynthesis via DXP pathway; isopentenyl diphosphate from 1-deoxy-D-xylulose 5-phosphate: step 4/6. Functionally, involved in the biosynthesis of isopentenyl diphosphate (IPP) and dimethylallyl diphosphate (DMAPP), two major building blocks of isoprenoid compounds. Catalyzes the conversion of 4-diphosphocytidyl-2-C-methyl-D-erythritol 2-phosphate (CDP-ME2P) to 2-C-methyl-D-erythritol 2,4-cyclodiphosphate (ME-CPP) with a corresponding release of cytidine 5-monophosphate (CMP). The protein is 2-C-methyl-D-erythritol 2,4-cyclodiphosphate synthase of Pelotomaculum thermopropionicum (strain DSM 13744 / JCM 10971 / SI).